Reading from the N-terminus, the 220-residue chain is UPF0319 protein YccT (220 aa).

The first 20 residues, 1–20 (MKTGALATFLALCLPATVFA), serve as a signal peptide directing secretion.

The protein belongs to the UPF0319 family.

The protein is UPF0319 protein YccT of Salmonella heidelberg (strain SL476).